A 201-amino-acid polypeptide reads, in one-letter code: Orotate phosphoribosyltransferase (201 aa).

Residues Lys-90 and 113-121 contribute to the 5-phospho-alpha-D-ribose 1-diphosphate site; that span reads EDIITTGGS. The orotate site is built by Thr-117 and Arg-145.

This sequence belongs to the purine/pyrimidine phosphoribosyltransferase family. PyrE subfamily. In terms of assembly, homodimer. Mg(2+) is required as a cofactor.

The catalysed reaction is orotidine 5'-phosphate + diphosphate = orotate + 5-phospho-alpha-D-ribose 1-diphosphate. The protein operates within pyrimidine metabolism; UMP biosynthesis via de novo pathway; UMP from orotate: step 1/2. In terms of biological role, catalyzes the transfer of a ribosyl phosphate group from 5-phosphoribose 1-diphosphate to orotate, leading to the formation of orotidine monophosphate (OMP). The chain is Orotate phosphoribosyltransferase from Sulfurovum sp. (strain NBC37-1).